The primary structure comprises 275 residues: Ciliary microtubule inner protein 2B (275 aa).

Disordered regions lie at residues 62–84 (PPIRPPRSPEVPRESLPVRRGQE) and 125–169 (EKQG…SPYS). Composition is skewed to basic and acidic residues over residues 71–84 (EVPRESLPVRRGQE) and 125–147 (EKQGSEELPKEAKGRKDTEKDQV).

This sequence belongs to the CIMIP2 family. As to quaternary structure, microtubule inner protein component of sperm flagellar doublet microtubules. In terms of tissue distribution, expressed in airway epithelial cells.

The protein localises to the cytoplasm. Its subcellular location is the cytoskeleton. The protein resides in the cilium axoneme. It localises to the flagellum axoneme. Functionally, microtubule inner protein (MIP) part of the dynein-decorated doublet microtubules (DMTs) in cilia axoneme, which is required for motile cilia beating. This chain is Ciliary microtubule inner protein 2B, found in Homo sapiens (Human).